The following is a 381-amino-acid chain: Cobalt-precorrin-5B C(1)-methyltransferase (381 aa).

It belongs to the CbiD family.

It catalyses the reaction Co-precorrin-5B + S-adenosyl-L-methionine = Co-precorrin-6A + S-adenosyl-L-homocysteine. It participates in cofactor biosynthesis; adenosylcobalamin biosynthesis; cob(II)yrinate a,c-diamide from sirohydrochlorin (anaerobic route): step 6/10. In terms of biological role, catalyzes the methylation of C-1 in cobalt-precorrin-5B to form cobalt-precorrin-6A. The sequence is that of Cobalt-precorrin-5B C(1)-methyltransferase from Prochlorococcus marinus (strain NATL2A).